Consider the following 1056-residue polypeptide: Carbamoyl phosphate synthase large chain (1056 aa).

Residues 1–401 (MPKRTDIHKI…ALHKAVRSLE (401 aa)) form a carboxyphosphate synthetic domain region. The ATP site is built by R129, R169, G175, G176, K208, I210, E215, G241, I242, H243, Q284, and E298. In terms of domain architecture, ATP-grasp 1 spans 133-327 (KELMNELGEP…IAKMAAKIAV (195 aa)). Positions 284, 298, and 300 each coordinate Mg(2+). Mn(2+) contacts are provided by Q284, E298, and N300. Residues 402-546 (IDEKDLFSAE…YSAYDHENES (145 aa)) form an oligomerization domain region. Positions 547–929 (QRTKKPSILV…ALHKAFSGAH (383 aa)) are carbamoyl phosphate synthetic domain. Positions 671–861 (DQVITDLNLK…MAQVATRVIL (191 aa)) constitute an ATP-grasp 2 domain. ATP contacts are provided by R707, A746, L748, E752, G777, V778, H779, S780, Q820, and E832. Q820, E832, and N834 together coordinate Mg(2+). Residues Q820, E832, and N834 each coordinate Mn(2+). Residues 930 to 1056 (IQVPNDGKIL…DQSLEAITIK (127 aa)) form the MGS-like domain. Residues 930 to 1056 (IQVPNDGKIL…DQSLEAITIK (127 aa)) are allosteric domain.

Belongs to the CarB family. In terms of assembly, composed of two chains; the small (or glutamine) chain promotes the hydrolysis of glutamine to ammonia, which is used by the large (or ammonia) chain to synthesize carbamoyl phosphate. Tetramer of heterodimers (alpha,beta)4. Mg(2+) is required as a cofactor. The cofactor is Mn(2+).

The catalysed reaction is hydrogencarbonate + L-glutamine + 2 ATP + H2O = carbamoyl phosphate + L-glutamate + 2 ADP + phosphate + 2 H(+). It catalyses the reaction hydrogencarbonate + NH4(+) + 2 ATP = carbamoyl phosphate + 2 ADP + phosphate + 2 H(+). Its pathway is amino-acid biosynthesis; L-arginine biosynthesis; carbamoyl phosphate from bicarbonate: step 1/1. It participates in pyrimidine metabolism; UMP biosynthesis via de novo pathway; (S)-dihydroorotate from bicarbonate: step 1/3. Functionally, large subunit of the glutamine-dependent carbamoyl phosphate synthetase (CPSase). CPSase catalyzes the formation of carbamoyl phosphate from the ammonia moiety of glutamine, carbonate, and phosphate donated by ATP, constituting the first step of 2 biosynthetic pathways, one leading to arginine and/or urea and the other to pyrimidine nucleotides. The large subunit (synthetase) binds the substrates ammonia (free or transferred from glutamine from the small subunit), hydrogencarbonate and ATP and carries out an ATP-coupled ligase reaction, activating hydrogencarbonate by forming carboxy phosphate which reacts with ammonia to form carbamoyl phosphate. The chain is Carbamoyl phosphate synthase large chain from Limosilactobacillus reuteri (strain DSM 20016) (Lactobacillus reuteri).